Here is a 122-residue protein sequence, read N- to C-terminus: UPF0102 protein Gmet_2864 (122 aa).

This sequence belongs to the UPF0102 family.

This chain is UPF0102 protein Gmet_2864, found in Geobacter metallireducens (strain ATCC 53774 / DSM 7210 / GS-15).